A 395-amino-acid polypeptide reads, in one-letter code: Proteinase-activated receptor 4 (395 aa).

An N-terminal signal peptide occupies residues 1-16 (MCWPLLYPLMLGFSIS). Positions 17–58 (PAECQTPSIYDDVESTREGQEASLRPTVELNESKSPDKPNPR) are cleaved as a propeptide — removed for receptor activation. A disordered region spans residues 46–66 (LNESKSPDKPNPRGFPGKPCA). The span at 47-56 (NESKSPDKPN) shows a compositional bias: basic and acidic residues. Residues 59 to 93 (GFPGKPCANNSDTLELPASSEALLLGWVPTRLVPA) are Extracellular-facing. N-linked (GlcNAc...) asparagine glycosylation is present at Asn67. Residues 94–114 (IYGLVVVVGLPANGLALWVLA) traverse the membrane as a helical segment. Topologically, residues 115-119 (TRVPR) are cytoplasmic. A helical membrane pass occupies residues 120 to 140 (LPSTILLMNLAVADLLLALVL). At 141-161 (PPRLVYHLRGQRWPFGEAACR) the chain is on the extracellular side. Residues Cys160 and Cys239 are joined by a disulfide bond. A helical transmembrane segment spans residues 162-182 (VATAALYGHMYGSVLLLAAVS). At 183-203 (LDRYLALVHSLRARALRGQRL) the chain is on the cytoplasmic side. The helical transmembrane segment at 204-224 (TTILCLVAWLSAATLVLPLTF) threads the bilayer. Residues 225-254 (HRQTFLLAGSDRMLCHDALPLAEQTSHWRP) lie on the Extracellular side of the membrane. The chain crosses the membrane as a helical span at residues 255 to 275 (AFICLAVLGCFVPLLAMVLCY). Residues 276–295 (GATLRALAANGQRYSHAVRL) lie on the Cytoplasmic side of the membrane. A helical membrane pass occupies residues 296–316 (TALVLFSAVAAFTPSNVLLVL). Residues 317–330 (HYSNPSPEAWGNLY) are Extracellular-facing. The chain crosses the membrane as a helical span at residues 331-354 (GAYVPSLALSTLNSCVDPFIYYYV). Residues 355–395 (SHEFREKVRAMLCRQLKASSSSQASREAGSRGTAICSSTLL) are Cytoplasmic-facing.

The protein belongs to the G-protein coupled receptor 1 family. In terms of processing, a proteolytic cleavage generates a new N-terminus that functions as a tethered ligand.

It is found in the cell membrane. Receptor for activated thrombin or trypsin coupled to G proteins that stimulate phosphoinositide hydrolysis. May play a role in platelets activation. This is Proteinase-activated receptor 4 (F2rl3) from Rattus norvegicus (Rat).